Here is a 35-residue protein sequence, read N- to C-terminus: Photosystem II reaction center protein Psb30 (35 aa).

The helical transmembrane segment at 7–27 (VFVQLLLLALIVLAGPAVILL) threads the bilayer.

The protein belongs to the Psb30/Ycf12 family. In terms of assembly, PSII is composed of 1 copy each of membrane proteins PsbA, PsbB, PsbC, PsbD, PsbE, PsbF, PsbH, PsbI, PsbJ, PsbK, PsbL, PsbM, PsbT, PsbX, PsbY, PsbZ, Psb30/Ycf12, peripheral proteins PsbO, CyanoQ (PsbQ), PsbU, PsbV and a large number of cofactors. It forms dimeric complexes.

It is found in the cellular thylakoid membrane. Functionally, a core subunit of photosystem II (PSII), probably helps stabilize the reaction center. This is Photosystem II reaction center protein Psb30 from Synechococcus sp. (strain JA-3-3Ab) (Cyanobacteria bacterium Yellowstone A-Prime).